A 225-amino-acid polypeptide reads, in one-letter code: NAD(P)H-quinone oxidoreductase subunit K, chloroplastic (225 aa).

Positions 43, 44, 108, and 139 each coordinate [4Fe-4S] cluster.

This sequence belongs to the complex I 20 kDa subunit family. As to quaternary structure, NDH is composed of at least 16 different subunits, 5 of which are encoded in the nucleus. [4Fe-4S] cluster is required as a cofactor.

The protein localises to the plastid. The protein resides in the chloroplast thylakoid membrane. It carries out the reaction a plastoquinone + NADH + (n+1) H(+)(in) = a plastoquinol + NAD(+) + n H(+)(out). It catalyses the reaction a plastoquinone + NADPH + (n+1) H(+)(in) = a plastoquinol + NADP(+) + n H(+)(out). NDH shuttles electrons from NAD(P)H:plastoquinone, via FMN and iron-sulfur (Fe-S) centers, to quinones in the photosynthetic chain and possibly in a chloroplast respiratory chain. The immediate electron acceptor for the enzyme in this species is believed to be plastoquinone. Couples the redox reaction to proton translocation, and thus conserves the redox energy in a proton gradient. The sequence is that of NAD(P)H-quinone oxidoreductase subunit K, chloroplastic from Vitis vinifera (Grape).